The sequence spans 585 residues: Arginine--tRNA ligase (585 aa).

A 'HIGH' region motif is present at residues 130 to 140 (ANPTGPMHVGH).

It belongs to the class-I aminoacyl-tRNA synthetase family. Monomer.

It localises to the cytoplasm. It carries out the reaction tRNA(Arg) + L-arginine + ATP = L-arginyl-tRNA(Arg) + AMP + diphosphate. In Methylorubrum extorquens (strain PA1) (Methylobacterium extorquens), this protein is Arginine--tRNA ligase.